The following is an 87-amino-acid chain: Small ribosomal subunit protein bS16 (87 aa).

This sequence belongs to the bacterial ribosomal protein bS16 family.

In Variovorax paradoxus (strain S110), this protein is Small ribosomal subunit protein bS16.